The following is a 305-amino-acid chain: Translation initiation factor eIF2B subunit alpha (305 aa).

N6-acetyllysine is present on lysine 35.

Belongs to the eIF-2B alpha/beta/delta subunits family. In terms of assembly, component of the translation initiation factor 2B (eIF2B) complex which is a heterodecamer of two sets of five different subunits: alpha, beta, gamma, delta and epsilon. Subunits alpha, beta and delta comprise a regulatory subcomplex and subunits epsilon and gamma comprise a catalytic subcomplex. Within the complex, the hexameric regulatory complex resides at the center, with the two heterodimeric catalytic subcomplexes bound on opposite sides.

It is found in the cytoplasm. The protein localises to the cytosol. Activated by the chemical integrated stress response (ISR) inhibitor ISRIB which stimulates guanine nucleotide exchange factor activity for both phosphorylated and unphosphorylated eIF2. Functionally, acts as a component of the translation initiation factor 2B (eIF2B) complex, which catalyzes the exchange of GDP for GTP on eukaryotic initiation factor 2 (eIF2) gamma subunit. Its guanine nucleotide exchange factor activity is repressed when bound to eIF2 complex phosphorylated on the alpha subunit, thereby limiting the amount of methionyl-initiator methionine tRNA available to the ribosome and consequently global translation is repressed. The polypeptide is Translation initiation factor eIF2B subunit alpha (EIF2B1) (Macaca fascicularis (Crab-eating macaque)).